We begin with the raw amino-acid sequence, 299 residues long: Putative peptidyl-prolyl cis-trans isomerase HP_0175 (299 aa).

An N-terminal signal peptide occupies residues M1 to A21. A PpiC domain is found at K154 to S253.

It catalyses the reaction [protein]-peptidylproline (omega=180) = [protein]-peptidylproline (omega=0). The sequence is that of Putative peptidyl-prolyl cis-trans isomerase HP_0175 from Helicobacter pylori (strain ATCC 700392 / 26695) (Campylobacter pylori).